Here is a 217-residue protein sequence, read N- to C-terminus: ATP-dependent Clp protease proteolytic subunit (217 aa).

Ser-121 (nucleophile) is an active-site residue. His-146 is a catalytic residue.

The protein belongs to the peptidase S14 family. As to quaternary structure, fourteen ClpP subunits assemble into 2 heptameric rings which stack back to back to give a disk-like structure with a central cavity, resembling the structure of eukaryotic proteasomes.

It localises to the cytoplasm. It carries out the reaction Hydrolysis of proteins to small peptides in the presence of ATP and magnesium. alpha-casein is the usual test substrate. In the absence of ATP, only oligopeptides shorter than five residues are hydrolyzed (such as succinyl-Leu-Tyr-|-NHMec, and Leu-Tyr-Leu-|-Tyr-Trp, in which cleavage of the -Tyr-|-Leu- and -Tyr-|-Trp bonds also occurs).. In terms of biological role, cleaves peptides in various proteins in a process that requires ATP hydrolysis. Has a chymotrypsin-like activity. Plays a major role in the degradation of misfolded proteins. The chain is ATP-dependent Clp protease proteolytic subunit from Burkholderia vietnamiensis (strain G4 / LMG 22486) (Burkholderia cepacia (strain R1808)).